The chain runs to 265 residues: MKKEVCSLAFLKAVFAEFLATLIFVFFGLASALKWPSALPTILQIALAFGLAIGTLAQALGPVSGGHINPAITLALLVGNQISLLRAVFYVVAQLVGAIAGAGILYGLAPGNARGNLAVNSLNNNTTPGQAVVVEMILTFQLALCIFSSTDSRRTSPVGSPALSIGLSVTLGHLVGIYFTGCSMNPARSFGPAVVMNRFSPSHWVFWVGPIVGAAVAAILYFYLLFPNSLSLSERVAVVKGTYESEEDWEEQREERKKTMELTAH.

The Cytoplasmic portion of the chain corresponds to 1-12 (MKKEVCSLAFLK). The helical transmembrane segment at 13 to 33 (AVFAEFLATLIFVFFGLASAL) threads the bilayer. The Extracellular portion of the chain corresponds to 34-39 (KWPSAL). A helical membrane pass occupies residues 40-60 (PTILQIALAFGLAIGTLAQAL). At 61–65 (GPVSG) the chain is on the cytoplasmic side. Positions 66 to 74 (GHINPAITL) form an intramembrane region, discontinuously helical. The NPA 1 motif lies at 69–71 (NPA). Residues 75 to 87 (ALLVGNQISLLRA) are Cytoplasmic-facing. The chain crosses the membrane as a helical span at residues 88-108 (VFYVVAQLVGAIAGAGILYGL). The Extracellular segment spans residues 109 to 126 (APGNARGNLAVNSLNNNT). N124 is a glycosylation site (N-linked (GlcNAc...) asparagine). Residues 127-147 (TPGQAVVVEMILTFQLALCIF) traverse the membrane as a helical segment. At 148–158 (SSTDSRRTSPV) the chain is on the cytoplasmic side. Residues 159 to 179 (GSPALSIGLSVTLGHLVGIYF) form a helical membrane-spanning segment. Position 180 (T180) is a topological domain, extracellular. Positions 181-191 (GCSMNPARSFG) form an intramembrane region, discontinuously helical. An NPA 2 motif is present at residues 185-187 (NPA). Residues 192-203 (PAVVMNRFSPSH) lie on the Extracellular side of the membrane. The helical transmembrane segment at 204 to 224 (WVFWVGPIVGAAVAAILYFYL) threads the bilayer. Residues 225-265 (LFPNSLSLSERVAVVKGTYESEEDWEEQREERKKTMELTAH) are Cytoplasmic-facing.

It belongs to the MIP/aquaporin (TC 1.A.8) family. In terms of assembly, homotetramer; each monomer provides an independent water pore. Interacts with TRPV4; the interaction is probably indirect and regulates TRPV4 activation by hypotonicity.

Its subcellular location is the apical cell membrane. It localises to the cell membrane. The protein resides in the cytoplasmic vesicle membrane. It catalyses the reaction H2O(in) = H2O(out). Its function is as follows. Aquaporins form homotetrameric transmembrane channels, with each monomer independently mediating water transport across the plasma membrane along its osmotic gradient. Plays an important role in fluid secretion in salivary glands. Required for TRPV4 activation by hypotonicity. Together with TRPV4, controls regulatory volume decrease in salivary epithelial cells. Seems to play a redundant role in water transport in the eye, lung and in sweat glands. The sequence is that of Aquaporin-5 from Sus scrofa (Pig).